Here is a 129-residue protein sequence, read N- to C-terminus: Cocaine- and amphetamine-regulated transcript protein (129 aa).

Residues 1 to 27 (MESSRLRLLPVLGAALLLLLPLLGAGA) form the signal peptide. Phosphotyrosine is present on Tyr-41. Phosphoserine is present on Ser-48. 3 cysteine pairs are disulfide-bonded: Cys-95/Cys-113, Cys-101/Cys-121, and Cys-115/Cys-128.

The protein belongs to the CART family. As to expression, neuroendocrine tissues. Predominantly expressed in the hypothalamus, pituitary, and longitudinal muscle-myenteric plexus. Abundant expression is also seen in the midbrain/thalamus and eye. A lower level expression is seen in the other brain regions and adrenal.

Its subcellular location is the secreted. Its function is as follows. Satiety factor closely associated with the actions of leptin and neuropeptide y; this anorectic peptide inhibits both normal and starvation-induced feeding and completely blocks the feeding response induced by neuropeptide Y and regulated by leptin in the hypothalamus. In Rattus norvegicus (Rat), this protein is Cocaine- and amphetamine-regulated transcript protein (Cartpt).